A 530-amino-acid chain; its full sequence is S-adenosylhomocysteine hydrolase-like protein 1 (530 aa).

Methionine 1 carries the post-translational modification N-acetylmethionine. Serine 2 carries the post-translational modification N-acetylserine. At serine 2 the chain carries Phosphoserine. Lysine 40 bears the N6-acetyllysine mark. Residues 53-103 (KFPTKTGRRSLSRSISQSSTDSYSSAASYTDSSDDEVSPREKQQTNSKGSS) are disordered. The span at 64-83 (SRSISQSSTDSYSSAASYTD) shows a compositional bias: low complexity. Residues 65–92 (RSISQSSTDSYSSAASYTDSSDDEVSPR) are PEST. Serine 68, serine 71, serine 74, serine 77, and serine 84 each carry phosphoserine. Residues 138–201 (QGEKPLAGAK…EAGVAVFAWK (64 aa)) form an interaction with BCL2L10 region. The substrate site is built by threonine 155, aspartate 229, glutamate 254, lysine 284, and aspartate 288. Residues 281–448 (SVTKQKFDNL…EGRLLNLSCS (168 aa)) are NAD binding. NAD(+)-binding positions include 318–322 (GYGEV), glutamate 341, and asparagine 376. Phosphoserine is present on serine 391. NAD(+) is bound at residue 397–399 (MGH). The PDZ-binding stretch occupies residues 520–530 (NGPFKPNYYRY).

The protein belongs to the adenosylhomocysteinase family. In terms of assembly, forms multimers. Forms heteromultimers with AHCYL2 (via the C-terminal region). Interacts (when phosphorylated) with ITPR1 (when not phosphorylated); the interaction suppresses inositol 1,4,5-trisphosphate binding to ITPR1. Interacts with BCL2L10; this strengthens the interaction of AHCYL1 with ITPR1. Interacts with CFTR and SLC26A6; the interactions take place once AHCYL1 is released from ITPR1 and increase CFTR and SLC26A6 activities. Interacts with RRM1; in a phosphorylation- and (dATP)-dependent manner. Interacts (via PEST domain when phosphorylated) with SLC4A4 isoform 1 but not isoform 2; the interaction increases SLC4A4 isoform 1 activity. Interacts (when phosphorylated) with SLC9A3; the interaction is required for SLC9A3 apical location and activity. Interacts (when phosphorylated) with FIP1L1; the interaction is direct and associates AHCYL1 with the CPSF complex and RNA. Interacts with PAPOLA. Interacts with ZCCHC4. Interacts with AHCY. The cofactor is NAD(+). Post-translationally, phosphorylated at Ser/Thr residues between Ser-68 and Thr-72 in the PEST region: required for interaction with dATP-bound RRM1 and ITPR1. Phosphorylation at Ser-68 by PRKD1 and CAMK4 is required for further phosphorylations by CSNK1A1. Phosphorylation is induced by oxidative stress. Probably phosphorylated by CAMK2A; phosphorylation at Ser-68 may be required for interaction with SLC9A3. Dephosphorylated in response to apoptotic stress conditions which causes translocation of both AHCYL1 and BCL2L10 from mitochondria-associated endoplasmic reticulum membranes and promotes apoptosis. In terms of tissue distribution, expressed in dendritic cells.

The protein localises to the endoplasmic reticulum. It is found in the cytoplasm. It localises to the cytosol. The protein resides in the apical cell membrane. Its subcellular location is the microsome. Multifaceted cellular regulator which coordinates several essential cellular functions including regulation of epithelial HCO3(-) and fluid secretion, mRNA processing and DNA replication. Regulates ITPR1 sensitivity to inositol 1,4,5-trisphosphate, competing for the common binding site and acting as endogenous 'pseudoligand' whose inhibitory activity can be modulated by its phosphorylation status. Promotes the formation of contact points between the endoplasmic reticulum (ER) and mitochondria, facilitating transfer of Ca(2+) from the ER to mitochondria. Under normal cellular conditions, functions cooperatively with BCL2L10 to limit ITPR1-mediated Ca(2+) release but, under apoptotic stress conditions, dephosphorylated which promotes dissociation of both AHCYL1 and BCL2L10 from mitochondria-associated endoplasmic reticulum membranes, inhibits BCL2L10 interaction with ITPR1 and leads to increased Ca(2+) transfer to mitochondria which promotes apoptosis. In the pancreatic and salivary ducts, at resting state, attenuates inositol 1,4,5-trisphosphate-induced calcium release by interacting with ITPR1. When extracellular stimuli induce ITPR1 phosphorylation or inositol 1,4,5-trisphosphate production, dissociates from ITPR1 to interact with CFTR and SLC26A6, mediating their synergistic activation by calcium and cAMP that stimulates the epithelial secretion of electrolytes and fluid. Also activates basolateral SLC4A4 isoform 1 to coordinate fluid and HCO3(-) secretion. Inhibits the effect of STK39 on SLC4A4 and CFTR by recruiting PP1 phosphatase which activates SLC4A4, SLC26A6 and CFTR through dephosphorylation. Mediates the induction of SLC9A3 surface expression produced by Angiotensin-2. Depending on the cell type, activates SLC9A3 in response to calcium or reverses SLC9A3R2-dependent calcium inhibition. May modulate the polyadenylation state of specific mRNAs, both by controlling the subcellular location of FIP1L1 and by inhibiting PAPOLA activity, in response to a stimulus that alters its phosphorylation state. Acts as a (dATP)-dependent inhibitor of ribonucleotide reductase large subunit RRM1, controlling the endogenous dNTP pool and ensuring normal cell cycle progression. In vitro does not exhibit any S-adenosyl-L-homocysteine hydrolase activity. The polypeptide is S-adenosylhomocysteine hydrolase-like protein 1 (Homo sapiens (Human)).